The following is a 403-amino-acid chain: Phosphopentomutase (403 aa).

Residues aspartate 13, aspartate 298, histidine 303, aspartate 339, histidine 340, and histidine 351 each coordinate Mn(2+).

Belongs to the phosphopentomutase family. The cofactor is Mn(2+).

It is found in the cytoplasm. It carries out the reaction 2-deoxy-alpha-D-ribose 1-phosphate = 2-deoxy-D-ribose 5-phosphate. The catalysed reaction is alpha-D-ribose 1-phosphate = D-ribose 5-phosphate. It participates in carbohydrate degradation; 2-deoxy-D-ribose 1-phosphate degradation; D-glyceraldehyde 3-phosphate and acetaldehyde from 2-deoxy-alpha-D-ribose 1-phosphate: step 1/2. Its function is as follows. Isomerase that catalyzes the conversion of deoxy-ribose 1-phosphate (dRib-1-P) and ribose 1-phosphate (Rib-1-P) to deoxy-ribose 5-phosphate (dRib-5-P) and ribose 5-phosphate (Rib-5-P), respectively. This is Phosphopentomutase from Streptococcus pneumoniae serotype 2 (strain D39 / NCTC 7466).